A 490-amino-acid chain; its full sequence is ATP synthase subunit beta (490 aa).

An ATP-binding site is contributed by 173–180 (GGAGVGKT).

It belongs to the ATPase alpha/beta chains family. In terms of assembly, F-type ATPases have 2 components, CF(1) - the catalytic core - and CF(0) - the membrane proton channel. CF(1) has five subunits: alpha(3), beta(3), gamma(1), delta(1), epsilon(1). CF(0) has three main subunits: a(1), b(2) and c(9-12). The alpha and beta chains form an alternating ring which encloses part of the gamma chain. CF(1) is attached to CF(0) by a central stalk formed by the gamma and epsilon chains, while a peripheral stalk is formed by the delta and b chains.

Its subcellular location is the cell membrane. The enzyme catalyses ATP + H2O + 4 H(+)(in) = ADP + phosphate + 5 H(+)(out). Produces ATP from ADP in the presence of a proton gradient across the membrane. The catalytic sites are hosted primarily by the beta subunits. The sequence is that of ATP synthase subunit beta from Bifidobacterium longum (strain DJO10A).